Reading from the N-terminus, the 142-residue chain is Transcriptional regulator MraZ (142 aa).

SpoVT-AbrB domains follow at residues 5-51 and 77-120; these read ASAL…PRPE and AMDV…DSQT.

This sequence belongs to the MraZ family. As to quaternary structure, forms oligomers.

It localises to the cytoplasm. The protein localises to the nucleoid. This is Transcriptional regulator MraZ from Burkholderia cenocepacia (strain HI2424).